Consider the following 291-residue polypeptide: ATP synthase gamma chain (291 aa).

This sequence belongs to the ATPase gamma chain family. In terms of assembly, F-type ATPases have 2 components, CF(1) - the catalytic core - and CF(0) - the membrane proton channel. CF(1) has five subunits: alpha(3), beta(3), gamma(1), delta(1), epsilon(1). CF(0) has three main subunits: a, b and c.

The protein localises to the cell inner membrane. Functionally, produces ATP from ADP in the presence of a proton gradient across the membrane. The gamma chain is believed to be important in regulating ATPase activity and the flow of protons through the CF(0) complex. The protein is ATP synthase gamma chain of Cupriavidus necator (strain ATCC 17699 / DSM 428 / KCTC 22496 / NCIMB 10442 / H16 / Stanier 337) (Ralstonia eutropha).